A 5233-amino-acid chain; its full sequence is E3 ubiquitin-protein ligase highwire (5233 aa).

A disordered region spans residues 197–230 (VVGGPGLPAEKRPRRDSANSDADSDTEEPTEREP). Residues 205–214 (AEKRPRRDSA) show a composition bias toward basic and acidic residues. 2 positions are modified to phosphoserine: Ser213 and Ser216. RCC1 repeat units follow at residues 615 to 666 (NGRV…ALLV), 669 to 724 (DGTV…FVTK), and 768 to 818 (KGQL…DKRL). The interval 680–700 (RGEDGDSSKNRRQPKAVKPKK) is disordered. Basic residues predominate over residues 689-700 (NRRQPKAVKPKK). The tract at residues 900 to 950 (TELKPPPSDVQQRQQRSKTLIMRRKERKGELETGAAGGGAATPTDLDKDPP) is disordered. A compositionally biased stretch (polar residues) spans 908–917 (DVQQRQQRSK). 3 RCC1 repeats span residues 931–983 (ETGA…VLTL), 984–1033 (AGEV…LLTS), and 1035–1084 (GMVY…TVAP). Disordered regions lie at residues 1051–1109 (LPSD…EMPP) and 1287–1327 (AAAA…PPQL). The span at 1092-1103 (RSQSPANVQPSG) shows a compositional bias: polar residues. Low complexity predominate over residues 1287–1302 (AAAAAVAAPGTPVSAG). The interval 1436–1587 (NRFDNFGGGW…GQIPAILYRL (152 aa)) is PHR domain 1. Residues 1681–1718 (SSTSVATGGGSNAAHGSGVVTTAKSVQSKPNKDKNTPR) form a disordered region. The segment covering 1699–1709 (VVTTAKSVQSK) has biased composition (polar residues). A PHR domain 2 region spans residues 2014-2169 (ARFARCDVSR…GQLPCILYYS (156 aa)). Disordered regions lie at residues 2329-2353 (SADLRNGQSQSVSQSQSQSQSVPIN) and 2580-2604 (NGAGDRRRNTGGGIAGSGAAPNTHQ). Residues 2336-2350 (QSQSVSQSQSQSQSV) show a composition bias toward low complexity. Residues 2885-4082 (AEVSAPGPNL…FVSSLNPTGG (1198 aa)) form a required for interaction with Rae1 region. The stretch at 2906 to 3000 (WGGMAPPPRI…LEEVYRVDVK (95 aa)) is one Filamin repeat. Disordered regions lie at residues 3005–3024 (PPPTQRNSAQRRPQAPSKLR), 3117–3210 (KGVG…EPEQ), 3277–3333 (GGQD…ASET), 3348–3378 (TTTGQGEQQSELQLATTSTASSASKRNPMGP), 3551–3587 (PRLLSPGSRDLNGDADTEGKEGKNSDQASAGEKDLGR), and 3901–3936 (ASLAQHNHPPPHHPQQQHHQQQQMNLQLQQHQAPPV). A compositionally biased stretch (basic and acidic residues) spans 3176 to 3191 (KHADLAEREAQVQEER). A compositionally biased stretch (acidic residues) spans 3192 to 3210 (EKEEEQVDDEDADDREPEQ). Residues 3282–3292 (PRGNGNRSQQE) show a composition bias toward polar residues. Positions 3348–3371 (TTTGQGEQQSELQLATTSTASSAS) are enriched in low complexity. The segment covering 3917–3932 (QHHQQQQMNLQLQQHQ) has biased composition (low complexity). A DOC domain is found at 4195-4374 (HNQVHSVATG…KHQPHLRLSH (180 aa)). Disordered regions lie at residues 4633–4655 (ASTGPSGSGGVSGSSSGNGGAVL) and 4680–4702 (LRSRPPTGEPGTTDPFQFDALPP). A compositionally biased stretch (gly residues) spans 4638-4652 (SGSGGVSGSSSGNGG). Cys4991, Cys4994, Cys5009, His5011, His5014, Cys5017, Cys5038, Cys5041, Cys5101, and Cys5104 together coordinate Zn(2+). The RING-type; atypical zinc finger occupies 4991–5042 (CMICFVEALSCAPSIHLECGHVFHYHCCKAVLEKRWSGPRITFGFSLCPICK). The tract at residues 5096-5231 (YAYYVCFKCQ…LGCGVCRNAQ (136 aa)) is tandem cysteine domain. The active site involves Cys5115. Zn(2+) is bound by residues Cys5130, Cys5133, Cys5142, His5145, Cys5154, Cys5157, and Cys5158. Cys5165 is a catalytic residue. 7 residues coordinate Zn(2+): Cys5172, Cys5175, Cys5193, Cys5207, His5213, Cys5224, and Cys5227.

This sequence belongs to the RING-Cys relay (RCR) family. Component of an E3 ubiquitin ligase complex composed of hiw, Rae1 and Fsn. Interacts with Rae1; the interaction with Rae1 may protect hiw from autophagy-mediated degradation. As to expression, express throughout the nervous system. Stage 13 embryos show expression in the central nervous system (CNS) at the longitudinal axon tracts around which the synaptic neuropil forms. Expression outside the CNS starts at stage 16 in presynaptic terminals at the periactive zone which surround the active zone. Expression at neuromuscular junctions (NMJ) and in the CNS is also seen in third instar larvae (at protein level).

It localises to the synapse. Its subcellular location is the cell projection. It is found in the axon. The catalysed reaction is [E2 ubiquitin-conjugating enzyme]-S-ubiquitinyl-L-cysteine + [acceptor protein]-L-threonine = [E2 ubiquitin-conjugating enzyme]-L-cysteine + [acceptor protein]-3-O-ubiquitinyl-L-threonine.. It participates in protein modification; protein ubiquitination. Functionally, atypical E3 ubiquitin-protein ligase which specifically mediates ubiquitination of threonine and serine residues on target proteins, instead of ubiquitinating lysine residues. Shows esterification activity towards both threonine and serine, with a preference for threonine, and acts via two essential catalytic cysteine residues that relay ubiquitin to its substrate via thioester intermediates. Required in the presynaptic motoneuron to down-regulate the levels of wnd and restrain synaptic terminal growth at the neuromuscular junction (NMJ) together with Rae1 and Fsn. This is E3 ubiquitin-protein ligase highwire from Drosophila melanogaster (Fruit fly).